Reading from the N-terminus, the 58-residue chain is Ribulose bisphosphate carboxylase large chain (58 aa).

Positions 1-2 (MS) are excised as a propeptide. An N-acetylproline modification is found at P3. Position 14 is an N6,N6,N6-trimethyllysine (K14).

It belongs to the RuBisCO large chain family. Type I subfamily. Heterohexadecamer of 8 large chains and 8 small chains.

It localises to the plastid. Its subcellular location is the chloroplast. It catalyses the reaction 2 (2R)-3-phosphoglycerate + 2 H(+) = D-ribulose 1,5-bisphosphate + CO2 + H2O. The catalysed reaction is D-ribulose 1,5-bisphosphate + O2 = 2-phosphoglycolate + (2R)-3-phosphoglycerate + 2 H(+). Its function is as follows. RuBisCO catalyzes two reactions: the carboxylation of D-ribulose 1,5-bisphosphate, the primary event in carbon dioxide fixation, as well as the oxidative fragmentation of the pentose substrate in the photorespiration process. Both reactions occur simultaneously and in competition at the same active site. The sequence is that of Ribulose bisphosphate carboxylase large chain (rbcL) from Euonymus maackii (Maack's spindle tree).